The primary structure comprises 88 residues: Small ribosomal subunit protein bS20 (88 aa).

The protein belongs to the bacterial ribosomal protein bS20 family.

Its function is as follows. Binds directly to 16S ribosomal RNA. This chain is Small ribosomal subunit protein bS20, found in Mycoplasmopsis synoviae (strain 53) (Mycoplasma synoviae).